The primary structure comprises 538 residues: Poly [ADP-ribose] polymerase 2 (538 aa).

In terms of domain architecture, WGR spans 1–94 (MSIINDENGR…RDDEPVPNKY (94 aa)). A disordered region spans residues 104–133 (RQTEKEVKKEEPEPEPKVDEKNTRGRKKRG). Positions 105-126 (QTEKEVKKEEPEPEPKVDEKNT) are enriched in basic and acidic residues. Positions 148-285 (VEEVNEKLKE…GSIEASLELK (138 aa)) constitute a PARP alpha-helical domain. The region spanning 309–535 (EPVSEEIAGK…VKVDRLTAKE (227 aa)) is the PARP catalytic domain. The interval 357 to 381 (QEVPKKRGRKSTKTAAPTVPPPTTK) is disordered.

This sequence belongs to the ARTD/PARP family.

The protein resides in the nucleus. It carries out the reaction NAD(+) + (ADP-D-ribosyl)n-acceptor = nicotinamide + (ADP-D-ribosyl)n+1-acceptor + H(+).. It catalyses the reaction L-aspartyl-[protein] + NAD(+) = 4-O-(ADP-D-ribosyl)-L-aspartyl-[protein] + nicotinamide. The enzyme catalyses L-glutamyl-[protein] + NAD(+) = 5-O-(ADP-D-ribosyl)-L-glutamyl-[protein] + nicotinamide. With respect to regulation, inhibited by N-(6-oxo-5,6-dihydrophenanthridin-2-yl)-N,N-dimethylacetamide HCl (PJ34), 1,5-dihydroxyisoquinoline (DHQ) and 3-aminobenzamide (3AB). In terms of biological role, poly[ADP-ribose] polymerase modifies various nuclear proteins by poly(ADP-ribosyl)ation, a post-translational modification synthesized after DNA damage that appears as an obligatory step in a detection/signaling pathway leading to the reparation of DNA strand breaks and programmed cell death. The protein is Poly [ADP-ribose] polymerase 2 of Caenorhabditis elegans.